Consider the following 133-residue polypeptide: Snaclec botrocetin subunit alpha (133 aa).

Cystine bridges form between Cys-2–Cys-13, Cys-30–Cys-128, and Cys-103–Cys-120. In terms of domain architecture, C-type lectin spans Tyr-9 to Lys-129.

It belongs to the snaclec family. In terms of assembly, heterodimer of subunits alpha and beta; disulfide-linked. Botrocetin and vWF form a soluble complex. In terms of tissue distribution, expressed by the venom gland.

It is found in the secreted. In terms of biological role, snaclec that binds to von Willebrand factor (VWF) and induces its interaction with GPIbalpha (GP1BA) (via the vWF A1 domain), resulting in platelet aggregation. The chain is Snaclec botrocetin subunit alpha from Bothrops jararaca (Jararaca).